We begin with the raw amino-acid sequence, 511 residues long: 2,3-bisphosphoglycerate-independent phosphoglycerate mutase (511 aa).

Mn(2+) contacts are provided by Asp-12 and Ser-62. Ser-62 functions as the Phosphoserine intermediate in the catalytic mechanism. Residues His-123, 153-154 (RD), Arg-185, Arg-191, 260-263 (RPDR), and Lys-335 each bind substrate. Mn(2+) is bound by residues Asp-402, His-406, Asp-443, His-444, and His-462.

The protein belongs to the BPG-independent phosphoglycerate mutase family. As to quaternary structure, monomer. It depends on Mn(2+) as a cofactor.

It catalyses the reaction (2R)-2-phosphoglycerate = (2R)-3-phosphoglycerate. It participates in carbohydrate degradation; glycolysis; pyruvate from D-glyceraldehyde 3-phosphate: step 3/5. Its function is as follows. Catalyzes the interconversion of 2-phosphoglycerate and 3-phosphoglycerate. In Acetivibrio thermocellus (strain ATCC 27405 / DSM 1237 / JCM 9322 / NBRC 103400 / NCIMB 10682 / NRRL B-4536 / VPI 7372) (Clostridium thermocellum), this protein is 2,3-bisphosphoglycerate-independent phosphoglycerate mutase.